A 406-amino-acid chain; its full sequence is Probable tRNA sulfurtransferase (406 aa).

The region spanning 62-167 is the THUMP domain; sequence AEVSNRLTKV…QDATYLSFED (106 aa). ATP is bound by residues 185–186, 210–211, Arg-267, Gly-289, and Gln-298; these read ML and HF.

This sequence belongs to the ThiI family.

It is found in the cytoplasm. The enzyme catalyses [ThiI sulfur-carrier protein]-S-sulfanyl-L-cysteine + a uridine in tRNA + 2 reduced [2Fe-2S]-[ferredoxin] + ATP + H(+) = [ThiI sulfur-carrier protein]-L-cysteine + a 4-thiouridine in tRNA + 2 oxidized [2Fe-2S]-[ferredoxin] + AMP + diphosphate. It carries out the reaction [ThiS sulfur-carrier protein]-C-terminal Gly-Gly-AMP + S-sulfanyl-L-cysteinyl-[cysteine desulfurase] + AH2 = [ThiS sulfur-carrier protein]-C-terminal-Gly-aminoethanethioate + L-cysteinyl-[cysteine desulfurase] + A + AMP + 2 H(+). It functions in the pathway cofactor biosynthesis; thiamine diphosphate biosynthesis. Its function is as follows. Catalyzes the ATP-dependent transfer of a sulfur to tRNA to produce 4-thiouridine in position 8 of tRNAs, which functions as a near-UV photosensor. Also catalyzes the transfer of sulfur to the sulfur carrier protein ThiS, forming ThiS-thiocarboxylate. This is a step in the synthesis of thiazole, in the thiamine biosynthesis pathway. The sulfur is donated as persulfide by IscS. The chain is Probable tRNA sulfurtransferase from Lactococcus lactis subsp. cremoris (strain MG1363).